The primary structure comprises 136 residues: Glutaredoxin-C8 (136 aa).

A Glutaredoxin domain is found at 33–135 (SSFVKSTVKA…KLLNIDVKED (103 aa)). Cys-53 and Cys-56 form a disulfide bridge.

Belongs to the glutaredoxin family. CPYC subfamily.

The protein localises to the cytoplasm. Has a glutathione-disulfide oxidoreductase activity in the presence of NADPH and glutathione reductase. Reduces low molecular weight disulfides and proteins. The chain is Glutaredoxin-C8 (GRXC8) from Oryza sativa subsp. japonica (Rice).